The chain runs to 320 residues: o-succinylbenzoate synthase (320 aa).

Lysine 133 (proton donor) is an active-site residue. Residues aspartate 161, glutamate 190, and aspartate 213 each coordinate Mg(2+). Lysine 235 functions as the Proton acceptor in the catalytic mechanism.

It belongs to the mandelate racemase/muconate lactonizing enzyme family. MenC type 1 subfamily. Requires a divalent metal cation as cofactor.

It carries out the reaction (1R,6R)-6-hydroxy-2-succinyl-cyclohexa-2,4-diene-1-carboxylate = 2-succinylbenzoate + H2O. It participates in quinol/quinone metabolism; 1,4-dihydroxy-2-naphthoate biosynthesis; 1,4-dihydroxy-2-naphthoate from chorismate: step 4/7. It functions in the pathway quinol/quinone metabolism; menaquinone biosynthesis. Converts 2-succinyl-6-hydroxy-2,4-cyclohexadiene-1-carboxylate (SHCHC) to 2-succinylbenzoate (OSB). The chain is o-succinylbenzoate synthase from Escherichia fergusonii (strain ATCC 35469 / DSM 13698 / CCUG 18766 / IAM 14443 / JCM 21226 / LMG 7866 / NBRC 102419 / NCTC 12128 / CDC 0568-73).